The following is a 209-amino-acid chain: Putative NAD(P)H nitroreductase YdgI (209 aa).

FMN is bound by residues 14-16 (RRS), 72-74 (QTQ), 161-162 (GG), and R199.

It belongs to the nitroreductase family. FMN is required as a cofactor.

The polypeptide is Putative NAD(P)H nitroreductase YdgI (ydgI) (Bacillus subtilis (strain 168)).